A 359-amino-acid chain; its full sequence is Aromatic amino acid aminotransferase (359 aa).

At K223 the chain carries N6-(pyridoxal phosphate)lysine.

Belongs to the class-II pyridoxal-phosphate-dependent aminotransferase family. As to quaternary structure, homodimer. Pyridoxal 5'-phosphate serves as cofactor.

The enzyme catalyses an aromatic L-alpha-amino acid + 2-oxoglutarate = an aromatic oxo-acid + L-glutamate. Its function is as follows. Aminotransferase that catalyzes the conversion of aromatic amino acids and 2-oxoglutarate into corresponding aromatic oxo acids and L-glutamate. This is Aromatic amino acid aminotransferase from Streptomyces avermitilis (strain ATCC 31267 / DSM 46492 / JCM 5070 / NBRC 14893 / NCIMB 12804 / NRRL 8165 / MA-4680).